The following is a 575-amino-acid chain: uncharacterized protein (575 aa).

The N-terminal stretch at 1–28 (MSNLLWKSLVVSPAVLGATLLVSSAAIA) is a signal peptide. The SLH domain maps to 87–151 (SVSQFSDVQP…DRVNELIATA (65 aa)). Residues 158–196 (KQDLATLQRLQEEFSAELATLRGRVDALEARTAELEANQ) are a coiled coil.

Belongs to the OprB family.

This is an uncharacterized protein from Nostoc sp. (strain PCC 7120 / SAG 25.82 / UTEX 2576).